The following is a 268-amino-acid chain: 4-hydroxy-tetrahydrodipicolinate reductase (268 aa).

NAD(+) is bound by residues 10-15 (GASGRM), aspartate 36, 99-101 (GTT), and 123-126 (APNM). The active-site Proton donor/acceptor is histidine 156. Histidine 157 is a binding site for (S)-2,3,4,5-tetrahydrodipicolinate. The active-site Proton donor is the lysine 160. (S)-2,3,4,5-tetrahydrodipicolinate is bound at residue 166–167 (GT).

The protein belongs to the DapB family.

The protein localises to the cytoplasm. It carries out the reaction (S)-2,3,4,5-tetrahydrodipicolinate + NAD(+) + H2O = (2S,4S)-4-hydroxy-2,3,4,5-tetrahydrodipicolinate + NADH + H(+). It catalyses the reaction (S)-2,3,4,5-tetrahydrodipicolinate + NADP(+) + H2O = (2S,4S)-4-hydroxy-2,3,4,5-tetrahydrodipicolinate + NADPH + H(+). It participates in amino-acid biosynthesis; L-lysine biosynthesis via DAP pathway; (S)-tetrahydrodipicolinate from L-aspartate: step 4/4. In terms of biological role, catalyzes the conversion of 4-hydroxy-tetrahydrodipicolinate (HTPA) to tetrahydrodipicolinate. In Janthinobacterium sp. (strain Marseille) (Minibacterium massiliensis), this protein is 4-hydroxy-tetrahydrodipicolinate reductase.